Consider the following 157-residue polypeptide: 2-C-methyl-D-erythritol 2,4-cyclodiphosphate synthase (157 aa).

The a divalent metal cation site is built by Asp8 and His10. Residues 8–10 and 34–35 each bind 4-CDP-2-C-methyl-D-erythritol 2-phosphate; these read DVH and HS. His42 is an a divalent metal cation binding site. 4-CDP-2-C-methyl-D-erythritol 2-phosphate contacts are provided by residues 56 to 58, 61 to 65, 100 to 106, 132 to 135, and Phe139; these read DIG, FPDTD, AQRPKMA, and TTEE.

This sequence belongs to the IspF family. As to quaternary structure, homotrimer. The cofactor is a divalent metal cation.

The catalysed reaction is 4-CDP-2-C-methyl-D-erythritol 2-phosphate = 2-C-methyl-D-erythritol 2,4-cyclic diphosphate + CMP. The protein operates within isoprenoid biosynthesis; isopentenyl diphosphate biosynthesis via DXP pathway; isopentenyl diphosphate from 1-deoxy-D-xylulose 5-phosphate: step 4/6. In terms of biological role, involved in the biosynthesis of isopentenyl diphosphate (IPP) and dimethylallyl diphosphate (DMAPP), two major building blocks of isoprenoid compounds. Catalyzes the conversion of 4-diphosphocytidyl-2-C-methyl-D-erythritol 2-phosphate (CDP-ME2P) to 2-C-methyl-D-erythritol 2,4-cyclodiphosphate (ME-CPP) with a corresponding release of cytidine 5-monophosphate (CMP). The sequence is that of 2-C-methyl-D-erythritol 2,4-cyclodiphosphate synthase from Trichlorobacter lovleyi (strain ATCC BAA-1151 / DSM 17278 / SZ) (Geobacter lovleyi).